The following is a 294-amino-acid chain: uncharacterized protein (294 aa).

The disordered stretch occupies residues D181–Q204. Residues H190 to Q204 are compositionally biased toward basic and acidic residues.

Belongs to the IIV-6 391R family.

This is an uncharacterized protein from Acheta domesticus (House cricket).